A 52-amino-acid polypeptide reads, in one-letter code: DNA-directed RNA polymerase subunit Rpo12 (52 aa).

Positions 13, 30, and 33 each coordinate Zn(2+).

It belongs to the archaeal Rpo12/eukaryotic RPC10 RNA polymerase subunit family. In terms of assembly, part of the RNA polymerase complex. Zn(2+) serves as cofactor.

The protein localises to the cytoplasm. It carries out the reaction RNA(n) + a ribonucleoside 5'-triphosphate = RNA(n+1) + diphosphate. Functionally, DNA-dependent RNA polymerase (RNAP) catalyzes the transcription of DNA into RNA using the four ribonucleoside triphosphates as substrates. This chain is DNA-directed RNA polymerase subunit Rpo12, found in Pyrobaculum neutrophilum (strain DSM 2338 / JCM 9278 / NBRC 100436 / V24Sta) (Thermoproteus neutrophilus).